Consider the following 89-residue polypeptide: Small ribosomal subunit protein uS15 (89 aa).

The protein belongs to the universal ribosomal protein uS15 family. Part of the 30S ribosomal subunit. Forms a bridge to the 50S subunit in the 70S ribosome, contacting the 23S rRNA.

Functionally, one of the primary rRNA binding proteins, it binds directly to 16S rRNA where it helps nucleate assembly of the platform of the 30S subunit by binding and bridging several RNA helices of the 16S rRNA. In terms of biological role, forms an intersubunit bridge (bridge B4) with the 23S rRNA of the 50S subunit in the ribosome. The polypeptide is Small ribosomal subunit protein uS15 (Bifidobacterium longum subsp. infantis (strain ATCC 15697 / DSM 20088 / JCM 1222 / NCTC 11817 / S12)).